The following is a 520-amino-acid chain: Transactivator/viroplasmin protein (520 aa).

Disordered stretches follow at residues 103–126 and 487–520; these read SDFLRPHQGIPIPPKPEPSSSVAP and EDASADSGPKDGPPPTRSIVEKEDVPTTSSKQVD.

Belongs to the caulimoviridae viroplasmin family.

Its subcellular location is the host cytoplasm. Its function is as follows. Enhances the ribosomal termination-reinitiation event leading to the translation of major open reading frames on the polycistronic viral RNAs. The chain is Transactivator/viroplasmin protein from Arabidopsis thaliana (Mouse-ear cress).